Reading from the N-terminus, the 757-residue chain is Zinc finger CCCH domain-containing protein 5 (757 aa).

Residues Met1–Asp127 are disordered. Over residues His13–Arg35 the composition is skewed to basic and acidic residues. Basic residues predominate over residues Lys36–Val50. Residues Arg51 to Asp127 are compositionally biased toward basic and acidic residues. The C3H1-type 1 zinc finger occupies Glu240 to Pro268. The RRM domain occupies Tyr295–Ile372. The C3H1-type 2 zinc-finger motif lies at Arg374 to Arg404. The disordered stretch occupies residues His441–Val757. The segment covering Ser444–Ser455 has biased composition (polar residues). Residues Tyr487–Pro546 are compositionally biased toward basic and acidic residues. Composition is skewed to basic residues over residues Gly547–Gly557 and Lys600–Ser609. 3 stretches are compositionally biased toward basic and acidic residues: residues Arg610–His634, Arg644–Val672, and Ser681–Lys721. The segment covering Glu722 to Thr733 has biased composition (basic residues).

This is Zinc finger CCCH domain-containing protein 5 from Arabidopsis thaliana (Mouse-ear cress).